The primary structure comprises 927 residues: Cell division control protein 15 (927 aa).

The 254-residue stretch at 20-273 folds into the F-BAR domain; sequence VKFRDNFWGS…TLENTNIDED (254 aa). Residues 108–207 adopt a coiled-coil conformation; sequence QQINTELRNK…AEYRETNELL (100 aa). Residues 321–354 are compositionally biased toward low complexity; it reads SRPSASASLASSPTRSAFRPKTSETVSSEVVSSP. 5 disordered regions span residues 321 to 370, 390 to 409, 423 to 495, 509 to 550, and 597 to 857; these read SRPS…SNEQ, ESQK…VTSP, VRSS…TSLG, PTSP…DELE, and SSSM…VDPR. Ser-331 and Ser-332 each carry phosphoserine. Residues 397 to 409 are compositionally biased toward polar residues; sequence TGSSMRRPSVTSP. The segment covering 444 to 461 has biased composition (basic and acidic residues); the sequence is PEVKEGKNSENAITKDND. Polar residues-rich tracts occupy residues 465 to 482, 513 to 546, and 616 to 625; these read LSSQ…SRLS, FMGS…SVQS, and LSKTSSSTRL. Residue Thr-529 is modified to Phosphothreonine. 2 positions are modified to phosphoserine: Ser-636 and Ser-639. Residues 658 to 675 are compositionally biased toward polar residues; the sequence is TSAQMQRMSNSFASQTKQ. Residues 680 to 691 are compositionally biased toward basic and acidic residues; the sequence is QRTENSARESLR. The span at 695–714 shows a compositional bias: low complexity; it reads SNMSRSPSPMLSRRSSTLRP. Ser-700 is modified (phosphoserine). 2 stretches are compositionally biased toward polar residues: residues 718–730 and 739–775; these read RSAS…QSDV and ARGQ…SVSP. Ser-774 carries the post-translational modification Phosphoserine. Residues 784 to 813 are compositionally biased toward low complexity; it reads SSSVLQSQKSTSSNTSNRNNGGYSGSRPSS. Residues 823 to 853 are compositionally biased toward polar residues; it reads SGRSMRQVSQRSTSRARSPEPTNRNSVQSKN. The SH3 domain occupies 866–927; that stretch reads PILGYVIALY…LFPSNFVQTV (62 aa).

The protein resides in the cytoplasm. Its subcellular location is the cytoskeleton. After the onset of mitosis, forms a ring-like structure which colocalizes with the medial actin ring. Appears to mediate cytoskeletal rearrangements required for cytokinesis. Essential for viability. The polypeptide is Cell division control protein 15 (cdc15) (Schizosaccharomyces pombe (strain 972 / ATCC 24843) (Fission yeast)).